We begin with the raw amino-acid sequence, 337 residues long: NADH-quinone oxidoreductase subunit H (337 aa).

A run of 8 helical transmembrane segments spans residues 9 to 29 (FAKIWAVLIPLFLAVAYFTYV), 77 to 97 (FLIAPAMAIMPALAAWAVIPF), 110 to 130 (LLYILAMTSLGVYGLIIAGWA), 154 to 174 (MGFALVGVLIAAGTMNLSGIV), 181 to 201 (FWEWFWLPLLPLFLIYWISGV), 229 to 249 (MAFAVFFLAEYANMLLISFLA), 274 to 294 (VPGIVWLFAKAAFFAFCYLWF), and 313 to 333 (VLIPGTVVWLVVLTGLVYGGV).

Belongs to the complex I subunit 1 family. As to quaternary structure, NDH-1 is composed of 14 different subunits. Subunits NuoA, H, J, K, L, M, N constitute the membrane sector of the complex.

Its subcellular location is the cell inner membrane. It carries out the reaction a quinone + NADH + 5 H(+)(in) = a quinol + NAD(+) + 4 H(+)(out). Its function is as follows. NDH-1 shuttles electrons from NADH, via FMN and iron-sulfur (Fe-S) centers, to quinones in the respiratory chain. The immediate electron acceptor for the enzyme in this species is believed to be ubiquinone. Couples the redox reaction to proton translocation (for every two electrons transferred, four hydrogen ions are translocated across the cytoplasmic membrane), and thus conserves the redox energy in a proton gradient. This subunit may bind ubiquinone. The chain is NADH-quinone oxidoreductase subunit H from Halorhodospira halophila (strain DSM 244 / SL1) (Ectothiorhodospira halophila (strain DSM 244 / SL1)).